Here is a 304-residue protein sequence, read N- to C-terminus: Ribonuclease Z (304 aa).

7 residues coordinate Zn(2+): His63, His65, Asp67, His68, His143, Asp213, and His271. The active-site Proton acceptor is Asp67.

Belongs to the RNase Z family. As to quaternary structure, homodimer. It depends on Zn(2+) as a cofactor.

The enzyme catalyses Endonucleolytic cleavage of RNA, removing extra 3' nucleotides from tRNA precursor, generating 3' termini of tRNAs. A 3'-hydroxy group is left at the tRNA terminus and a 5'-phosphoryl group is left at the trailer molecule.. Functionally, zinc phosphodiesterase, which displays some tRNA 3'-processing endonuclease activity. Probably involved in tRNA maturation, by removing a 3'-trailer from precursor tRNA. In Parabacteroides distasonis (strain ATCC 8503 / DSM 20701 / CIP 104284 / JCM 5825 / NCTC 11152), this protein is Ribonuclease Z.